The primary structure comprises 60 residues: UPF0509 protein ESA_01586 (60 aa).

Belongs to the UPF0509 family.

This chain is UPF0509 protein ESA_01586, found in Cronobacter sakazakii (strain ATCC BAA-894) (Enterobacter sakazakii).